A 295-amino-acid polypeptide reads, in one-letter code: Glycine--tRNA ligase alpha subunit (295 aa).

This sequence belongs to the class-II aminoacyl-tRNA synthetase family. In terms of assembly, tetramer of two alpha and two beta subunits.

Its subcellular location is the cytoplasm. The catalysed reaction is tRNA(Gly) + glycine + ATP = glycyl-tRNA(Gly) + AMP + diphosphate. In Desulforamulus reducens (strain ATCC BAA-1160 / DSM 100696 / MI-1) (Desulfotomaculum reducens), this protein is Glycine--tRNA ligase alpha subunit.